We begin with the raw amino-acid sequence, 123 residues long: Small ribosomal subunit protein uS12 (123 aa).

The residue at position 89 (D89) is a 3-methylthioaspartic acid.

Belongs to the universal ribosomal protein uS12 family. Part of the 30S ribosomal subunit. Contacts proteins S8 and S17. May interact with IF1 in the 30S initiation complex.

In terms of biological role, with S4 and S5 plays an important role in translational accuracy. Interacts with and stabilizes bases of the 16S rRNA that are involved in tRNA selection in the A site and with the mRNA backbone. Located at the interface of the 30S and 50S subunits, it traverses the body of the 30S subunit contacting proteins on the other side and probably holding the rRNA structure together. The combined cluster of proteins S8, S12 and S17 appears to hold together the shoulder and platform of the 30S subunit. The protein is Small ribosomal subunit protein uS12 of Nitrobacter winogradskyi (strain ATCC 25391 / DSM 10237 / CIP 104748 / NCIMB 11846 / Nb-255).